The following is a 396-amino-acid chain: NADH-quinone oxidoreductase subunit D (396 aa).

It belongs to the complex I 49 kDa subunit family. In terms of assembly, NDH-1 is composed of 14 different subunits. Subunits NuoB, C, D, E, F, and G constitute the peripheral sector of the complex.

It is found in the cell inner membrane. It catalyses the reaction a quinone + NADH + 5 H(+)(in) = a quinol + NAD(+) + 4 H(+)(out). Functionally, NDH-1 shuttles electrons from NADH, via FMN and iron-sulfur (Fe-S) centers, to quinones in the respiratory chain. The immediate electron acceptor for the enzyme in this species is believed to be ubiquinone. Couples the redox reaction to proton translocation (for every two electrons transferred, four hydrogen ions are translocated across the cytoplasmic membrane), and thus conserves the redox energy in a proton gradient. The polypeptide is NADH-quinone oxidoreductase subunit D (Rhodopseudomonas palustris (strain BisB18)).